The chain runs to 184 residues: ADP-ribosylation factor-like protein 2 (184 aa).

Glycine 2 carries the N-myristoyl glycine lipid modification. Residues 23 to 30 (GLDNAGKT), 66 to 70 (DVGGQ), and 125 to 128 (NKQD) contribute to the GTP site.

Belongs to the small GTPase superfamily. Arf family. In terms of tissue distribution, ubiquitously expressed.

Its function is as follows. GTP-binding protein involved in protein trafficking; may modulate vesicle budding and uncoating within the Golgi apparatus. The polypeptide is ADP-ribosylation factor-like protein 2 (Arl2) (Drosophila melanogaster (Fruit fly)).